The primary structure comprises 452 residues: Protein FAM81B (452 aa).

Polar residues-rich tracts occupy residues methionine 1–serine 11 and isoleucine 38–alanine 55. The tract at residues methionine 1–serine 85 is disordered. 2 coiled-coil regions span residues isoleucine 164–alanine 192 and leucine 329–valine 452.

This sequence belongs to the FAM81 family.

In Homo sapiens (Human), this protein is Protein FAM81B (FAM81B).